Consider the following 323-residue polypeptide: Lipoyl synthase (323 aa).

[4Fe-4S] cluster-binding residues include cysteine 61, cysteine 66, cysteine 72, cysteine 87, cysteine 91, cysteine 94, and serine 300. Residues 73-289 (WDKKHATFMI…ETVAYSKGFL (217 aa)) form the Radical SAM core domain.

This sequence belongs to the radical SAM superfamily. Lipoyl synthase family. The cofactor is [4Fe-4S] cluster.

Its subcellular location is the cytoplasm. It catalyses the reaction [[Fe-S] cluster scaffold protein carrying a second [4Fe-4S](2+) cluster] + N(6)-octanoyl-L-lysyl-[protein] + 2 oxidized [2Fe-2S]-[ferredoxin] + 2 S-adenosyl-L-methionine + 4 H(+) = [[Fe-S] cluster scaffold protein] + N(6)-[(R)-dihydrolipoyl]-L-lysyl-[protein] + 4 Fe(3+) + 2 hydrogen sulfide + 2 5'-deoxyadenosine + 2 L-methionine + 2 reduced [2Fe-2S]-[ferredoxin]. Its pathway is protein modification; protein lipoylation via endogenous pathway; protein N(6)-(lipoyl)lysine from octanoyl-[acyl-carrier-protein]: step 2/2. In terms of biological role, catalyzes the radical-mediated insertion of two sulfur atoms into the C-6 and C-8 positions of the octanoyl moiety bound to the lipoyl domains of lipoate-dependent enzymes, thereby converting the octanoylated domains into lipoylated derivatives. In Rhizobium etli (strain CIAT 652), this protein is Lipoyl synthase.